The sequence spans 83 residues: Large ribosomal subunit protein bL31 (83 aa).

This sequence belongs to the bacterial ribosomal protein bL31 family. Type A subfamily. As to quaternary structure, part of the 50S ribosomal subunit.

Its function is as follows. Binds the 23S rRNA. The sequence is that of Large ribosomal subunit protein bL31 from Gloeothece citriformis (strain PCC 7424) (Cyanothece sp. (strain PCC 7424)).